The primary structure comprises 622 residues: Chaperone protein DnaK (622 aa).

The residue at position 197 (T197) is a Phosphothreonine; by autocatalysis. Composition is skewed to basic and acidic residues over residues 515-528 and 575-614; these read LHKE…EAVE and ASKE…KKDD. Disordered regions lie at residues 515–537 and 575–622; these read LHKE…DSLV and ASKE…AEVE.

This sequence belongs to the heat shock protein 70 family.

Its function is as follows. Acts as a chaperone. In Campylobacter lari (strain RM2100 / D67 / ATCC BAA-1060), this protein is Chaperone protein DnaK.